The primary structure comprises 391 residues: Phosphoglycerate kinase (391 aa).

Substrate contacts are provided by residues 21–23 (DLN), Arg36, 59–62 (HLGR), Arg113, and Arg146. ATP is bound by residues Lys197, Glu319, and 345–348 (GGDT).

The protein belongs to the phosphoglycerate kinase family. Monomer.

The protein resides in the cytoplasm. It catalyses the reaction (2R)-3-phosphoglycerate + ATP = (2R)-3-phospho-glyceroyl phosphate + ADP. The protein operates within carbohydrate degradation; glycolysis; pyruvate from D-glyceraldehyde 3-phosphate: step 2/5. The protein is Phosphoglycerate kinase of Shewanella sp. (strain MR-7).